A 245-amino-acid chain; its full sequence is MRVDGREKTELRHIHIHTNYLKHPEGSVLIEVGDTKVICSATIEERVPPFMRGEGKGWVTAEYAMIPRATEQRTIRESSKGKVTGRTMEIQRLIGRALRAVVDLEALGERTVWIDCDVIQADGGTRTASITGAYVAMVLAFEKLLQAEKVSKIPVKDYLAATSVGIVEEQGVVLDLNYAEDSKADVDMNVIMTGKGQFVEVQGTGEEATFSRAQLNELLDAAEKGIFQLIDMQKEALGDIVSHIE.

Residues Arg-86 and 124-126 (GTR) each bind phosphate.

This sequence belongs to the RNase PH family. As to quaternary structure, homohexameric ring arranged as a trimer of dimers.

The enzyme catalyses tRNA(n+1) + phosphate = tRNA(n) + a ribonucleoside 5'-diphosphate. Its function is as follows. Phosphorolytic 3'-5' exoribonuclease that plays an important role in tRNA 3'-end maturation. Removes nucleotide residues following the 3'-CCA terminus of tRNAs; can also add nucleotides to the ends of RNA molecules by using nucleoside diphosphates as substrates, but this may not be physiologically important. Probably plays a role in initiation of 16S rRNA degradation (leading to ribosome degradation) during starvation. The chain is Ribonuclease PH from Bacillus cereus (strain G9842).